We begin with the raw amino-acid sequence, 314 residues long: Ribose-phosphate pyrophosphokinase (314 aa).

Residues 37–39 (DGE) and 96–97 (RQ) each bind ATP. H131 and D170 together coordinate Mg(2+). The active site involves K194. Residues R196, D220, and 224 to 228 (DTGGT) contribute to the D-ribose 5-phosphate site.

Belongs to the ribose-phosphate pyrophosphokinase family. Class I subfamily. Homohexamer. Mg(2+) is required as a cofactor.

It is found in the cytoplasm. The enzyme catalyses D-ribose 5-phosphate + ATP = 5-phospho-alpha-D-ribose 1-diphosphate + AMP + H(+). It functions in the pathway metabolic intermediate biosynthesis; 5-phospho-alpha-D-ribose 1-diphosphate biosynthesis; 5-phospho-alpha-D-ribose 1-diphosphate from D-ribose 5-phosphate (route I): step 1/1. In terms of biological role, involved in the biosynthesis of the central metabolite phospho-alpha-D-ribosyl-1-pyrophosphate (PRPP) via the transfer of pyrophosphoryl group from ATP to 1-hydroxyl of ribose-5-phosphate (Rib-5-P). This Vibrio vulnificus (strain CMCP6) protein is Ribose-phosphate pyrophosphokinase.